The sequence spans 1088 residues: RNA-directed RNA polymerase (1088 aa).

The RdRp catalytic domain maps to 501-687 (LSYGDVTRFL…AKRYIAGGKI (187 aa)).

It belongs to the reoviridae RNA-directed RNA polymerase family. Interacts with VP3 (Potential). Interacts with VP2; this interaction activates VP1. Interacts with NSP5; this interaction is probably necessary for the formation of functional virus factories. Interacts with NSP2; this interaction is weak. Mg(2+) serves as cofactor.

It is found in the virion. It carries out the reaction RNA(n) + a ribonucleoside 5'-triphosphate = RNA(n+1) + diphosphate. RNA-directed RNA polymerase that is involved in both transcription and genome replication. Together with VP3 capping enzyme, forms an enzyme complex positioned near the channels situated at each of the five-fold vertices of the core. Following infection, the outermost layer of the virus is lost, leaving a double-layered particle (DLP) made up of the core and VP6 shell. VP1 then catalyzes the transcription of fully conservative plus-strand genomic RNAs that are extruded through the DLP's channels into the cytoplasm where they function as mRNAs for translation of viral proteins. One copy of each of the viral (+)RNAs is also recruited during core assembly, together with newly synthesized polymerase complexes and VP2. The polymerase of these novo-formed particles catalyzes the synthesis of complementary minus-strands leading to dsRNA formation. To do so, the polymerase specifically recognizes and binds 4 bases 5'-UGUG-3' in the conserved 3'-sequence of plus-strand RNA templates. VP2 presumably activates the autoinhibited VP1-RNA complex to coordinate packaging and genome replication. Once dsRNA synthesis is complete, the polymerase switches to the transcriptional mode, thus providing secondary transcription. The protein is RNA-directed RNA polymerase of Homo sapiens (Human).